We begin with the raw amino-acid sequence, 298 residues long: Protein FAM221A (298 aa).

Positions 241–257 are enriched in polar residues; sequence SSPETLTDVGTSSQVSS. Positions 241 to 263 are disordered; it reads SSPETLTDVGTSSQVSSLRRPEE.

This sequence belongs to the FAM221 family.

This is Protein FAM221A (FAM221A) from Homo sapiens (Human).